The sequence spans 205 residues: MIGRIRGLLIEKQAPEVLVDVSGVGYEIQMPLTSFYELPELGQEAVIYTHFVVREDAQLLYGFISKQERSLFRLLIKANGVGPKLGLTILSGMTAREFVACVERDDIATLVKLPGVGKKTAERLLVEMRDKLKSLMEASVGSEREFMLQSNYTAPEAVNTAEEDAIAALLSLGYKPAQASKAVSSVYTDGMSSETLIKSALKSML.

Residues 1 to 64 (MIGRIRGLLI…EDAQLLYGFI (64 aa)) form a domain I region. Residues 65-143 (SKQERSLFRL…SLMEASVGSE (79 aa)) are domain II. Positions 144–156 (REFMLQSNYTAPE) are flexible linker. Residues 157-205 (AVNTAEEDAIAALLSLGYKPAQASKAVSSVYTDGMSSETLIKSALKSML) are domain III.

The protein belongs to the RuvA family. Homotetramer. Forms an RuvA(8)-RuvB(12)-Holliday junction (HJ) complex. HJ DNA is sandwiched between 2 RuvA tetramers; dsDNA enters through RuvA and exits via RuvB. An RuvB hexamer assembles on each DNA strand where it exits the tetramer. Each RuvB hexamer is contacted by two RuvA subunits (via domain III) on 2 adjacent RuvB subunits; this complex drives branch migration. In the full resolvosome a probable DNA-RuvA(4)-RuvB(12)-RuvC(2) complex forms which resolves the HJ.

It localises to the cytoplasm. In terms of biological role, the RuvA-RuvB-RuvC complex processes Holliday junction (HJ) DNA during genetic recombination and DNA repair, while the RuvA-RuvB complex plays an important role in the rescue of blocked DNA replication forks via replication fork reversal (RFR). RuvA specifically binds to HJ cruciform DNA, conferring on it an open structure. The RuvB hexamer acts as an ATP-dependent pump, pulling dsDNA into and through the RuvAB complex. HJ branch migration allows RuvC to scan DNA until it finds its consensus sequence, where it cleaves and resolves the cruciform DNA. The protein is Holliday junction branch migration complex subunit RuvA of Shewanella halifaxensis (strain HAW-EB4).